We begin with the raw amino-acid sequence, 189 residues long: ATP-dependent protease subunit HslV (189 aa).

The active site involves Thr-12. Residues Ala-172, Cys-175, and Thr-178 each contribute to the Na(+) site.

The protein belongs to the peptidase T1B family. HslV subfamily. In terms of assembly, a double ring-shaped homohexamer of HslV is capped on each side by a ring-shaped HslU homohexamer. The assembly of the HslU/HslV complex is dependent on binding of ATP.

Its subcellular location is the cytoplasm. The catalysed reaction is ATP-dependent cleavage of peptide bonds with broad specificity.. With respect to regulation, allosterically activated by HslU binding. Its function is as follows. Protease subunit of a proteasome-like degradation complex believed to be a general protein degrading machinery. This chain is ATP-dependent protease subunit HslV, found in Ehrlichia ruminantium (strain Welgevonden).